Here is a 123-residue protein sequence, read N- to C-terminus: Fluoride-specific ion channel FluC 2 (123 aa).

A run of 2 helical transmembrane segments spans residues 1–21 (MTML…FLLD) and 30–50 (VPVP…LGLI). Na(+) contacts are provided by Gly74 and Thr77. Residues 99 to 119 (ALHCMGMAIAGVLAAILGLAL) form a helical membrane-spanning segment.

This sequence belongs to the fluoride channel Fluc/FEX (TC 1.A.43) family.

The protein localises to the cell membrane. The catalysed reaction is fluoride(in) = fluoride(out). Na(+) is not transported, but it plays an essential structural role and its presence is essential for fluoride channel function. Fluoride-specific ion channel. Important for reducing fluoride concentration in the cell, thus reducing its toxicity. This is Fluoride-specific ion channel FluC 2 from Cutibacterium acnes (strain DSM 16379 / KPA171202) (Propionibacterium acnes).